We begin with the raw amino-acid sequence, 165 residues long: uncharacterized protein (165 aa).

The segment at 28-97 (EASAPSGNPP…QLSQSLEVPT (70 aa)) is disordered. Pro residues predominate over residues 34–47 (GNPPPPPPPPPPPI). Composition is skewed to polar residues over residues 54–66 (KSLN…QLDN) and 73–94 (AQHT…QSLE).

This is an uncharacterized protein from Rickettsia prowazekii (strain Madrid E).